We begin with the raw amino-acid sequence, 335 residues long: Probable peroxidase 26 (335 aa).

The N-terminal stretch at 1–18 (MVMIHIFLTVMVVGGVSL) is a signal peptide. 4 disulfide bridges follow: cysteine 46–cysteine 122, cysteine 79–cysteine 84, cysteine 128–cysteine 331, and cysteine 205–cysteine 237. The active site involves arginine 73. Residues aspartate 78, valine 81, glycine 83, aspartate 85, and serine 87 each contribute to the Ca(2+) site. A substrate-binding site is contributed by proline 168. Histidine 198 contacts heme b. Serine 199 serves as a coordination point for Ca(2+). N-linked (GlcNAc...) asparagine glycosylation occurs at asparagine 216. Positions 255 and 258 each coordinate Ca(2+). N-linked (GlcNAc...) asparagine glycosylation is found at asparagine 259 and asparagine 273.

It belongs to the peroxidase family. Classical plant (class III) peroxidase subfamily. Requires heme b as cofactor. Ca(2+) is required as a cofactor.

The protein resides in the secreted. The enzyme catalyses 2 a phenolic donor + H2O2 = 2 a phenolic radical donor + 2 H2O. Removal of H(2)O(2), oxidation of toxic reductants, biosynthesis and degradation of lignin, suberization, auxin catabolism, response to environmental stresses such as wounding, pathogen attack and oxidative stress. The enzyme activity has to be proved. This chain is Probable peroxidase 26 (PER26), found in Arabidopsis thaliana (Mouse-ear cress).